A 132-amino-acid polypeptide reads, in one-letter code: Ribosome-binding factor A (132 aa).

Belongs to the RbfA family. Monomer. Binds 30S ribosomal subunits, but not 50S ribosomal subunits or 70S ribosomes.

Its subcellular location is the cytoplasm. In terms of biological role, one of several proteins that assist in the late maturation steps of the functional core of the 30S ribosomal subunit. Associates with free 30S ribosomal subunits (but not with 30S subunits that are part of 70S ribosomes or polysomes). Required for efficient processing of 16S rRNA. May interact with the 5'-terminal helix region of 16S rRNA. This Burkholderia lata (strain ATCC 17760 / DSM 23089 / LMG 22485 / NCIMB 9086 / R18194 / 383) protein is Ribosome-binding factor A.